The chain runs to 119 residues: Large ribosomal subunit protein bL20 (119 aa).

It belongs to the bacterial ribosomal protein bL20 family.

Functionally, binds directly to 23S ribosomal RNA and is necessary for the in vitro assembly process of the 50S ribosomal subunit. It is not involved in the protein synthesizing functions of that subunit. In Rhodopseudomonas palustris (strain BisB5), this protein is Large ribosomal subunit protein bL20.